Here is a 305-residue protein sequence, read N- to C-terminus: Homoserine kinase (305 aa).

90-100 (PLARGLGSSAS) is an ATP binding site.

The protein belongs to the GHMP kinase family. Homoserine kinase subfamily.

It is found in the cytoplasm. The catalysed reaction is L-homoserine + ATP = O-phospho-L-homoserine + ADP + H(+). It participates in amino-acid biosynthesis; L-threonine biosynthesis; L-threonine from L-aspartate: step 4/5. Functionally, catalyzes the ATP-dependent phosphorylation of L-homoserine to L-homoserine phosphate. This Staphylococcus haemolyticus (strain JCSC1435) protein is Homoserine kinase.